We begin with the raw amino-acid sequence, 205 residues long: Imidazoleglycerol-phosphate dehydratase (205 aa).

This sequence belongs to the imidazoleglycerol-phosphate dehydratase family.

Its subcellular location is the cytoplasm. It catalyses the reaction D-erythro-1-(imidazol-4-yl)glycerol 3-phosphate = 3-(imidazol-4-yl)-2-oxopropyl phosphate + H2O. It participates in amino-acid biosynthesis; L-histidine biosynthesis; L-histidine from 5-phospho-alpha-D-ribose 1-diphosphate: step 6/9. The sequence is that of Imidazoleglycerol-phosphate dehydratase from Chloroflexus aggregans (strain MD-66 / DSM 9485).